A 365-amino-acid chain; its full sequence is Putative agmatine deiminase (365 aa).

C356 functions as the Amidino-cysteine intermediate in the catalytic mechanism.

This sequence belongs to the agmatine deiminase family.

The enzyme catalyses agmatine + H2O = N-carbamoylputrescine + NH4(+). The protein is Putative agmatine deiminase of Latilactobacillus sakei subsp. sakei (strain 23K) (Lactobacillus sakei subsp. sakei).